We begin with the raw amino-acid sequence, 521 residues long: Probable cytochrome P450 12d1 distal, mitochondrial (521 aa).

The N-terminal 19 residues, 1–19 (MNTLSSARSVAIYVGPVRS), are a transit peptide targeting the mitochondrion. Heme is bound at residue cysteine 467.

This sequence belongs to the cytochrome P450 family. It depends on heme as a cofactor.

Its subcellular location is the mitochondrion membrane. The polypeptide is Probable cytochrome P450 12d1 distal, mitochondrial (Drosophila melanogaster (Fruit fly)).